Reading from the N-terminus, the 829-residue chain is Leucine--tRNA ligase (829 aa).

Residues 40-50 (PYPSGNIHMGH) carry the 'HIGH' region motif. The 'KMSKS' region signature appears at 581–585 (KMSKS). ATP is bound at residue lysine 584.

It belongs to the class-I aminoacyl-tRNA synthetase family.

The protein resides in the cytoplasm. It catalyses the reaction tRNA(Leu) + L-leucine + ATP = L-leucyl-tRNA(Leu) + AMP + diphosphate. This chain is Leucine--tRNA ligase, found in Oleidesulfovibrio alaskensis (strain ATCC BAA-1058 / DSM 17464 / G20) (Desulfovibrio alaskensis).